We begin with the raw amino-acid sequence, 87 residues long: Large ribosomal subunit protein bL27 (87 aa).

The interval 1–21 (MAHKKAGGSSRNGRDSESKRL) is disordered.

It belongs to the bacterial ribosomal protein bL27 family.

This is Large ribosomal subunit protein bL27 from Aromatoleum aromaticum (strain DSM 19018 / LMG 30748 / EbN1) (Azoarcus sp. (strain EbN1)).